The sequence spans 190 residues: MAFIAKSFYDLSAISLDGEKVDFNTFRGRAVLIENVASLUGTTTRDFTQLNELQCRFPRRLVVLGFPCHQFGHQENCQNEEILNSLKYVRPGGGYQPTFTLVQKCEVNGQNEHPVFAYLKDKLPYPHDDPFSLMTDPKLIIWSPVRRSDVAWNFEKFLIGPEGEPFRRYSRTFPTINIEPDIKRLLNVAI.

Selenocysteine 40 is a catalytic residue. A non-standard amino acid (selenocysteine) is located at residue selenocysteine 40.

It belongs to the glutathione peroxidase family. Homotetramer.

It is found in the cytoplasm. The protein localises to the cytosol. The enzyme catalyses 2 glutathione + H2O2 = glutathione disulfide + 2 H2O. The catalysed reaction is a hydroperoxy polyunsaturated fatty acid + 2 glutathione = a hydroxy polyunsaturated fatty acid + glutathione disulfide + H2O. It carries out the reaction tert-butyl hydroperoxide + 2 glutathione = tert-butanol + glutathione disulfide + H2O. It catalyses the reaction cumene hydroperoxide + 2 glutathione = 2-phenylpropan-2-ol + glutathione disulfide + H2O. The enzyme catalyses (13S)-hydroperoxy-(9Z,11E)-octadecadienoate + 2 glutathione = (13S)-hydroxy-(9Z,11E)-octadecadienoate + glutathione disulfide + H2O. The catalysed reaction is (5S)-hydroperoxy-(6E,8Z,11Z,14Z)-eicosatetraenoate + 2 glutathione = (5S)-hydroxy-(6E,8Z,11Z,14Z)-eicosatetraenoate + glutathione disulfide + H2O. It carries out the reaction (12R)-hydroperoxy-(5Z,8Z,10E,14Z)-eicosatetraenoate + 2 glutathione = (12R)-hydroxy-(5Z,8Z,10E,14Z)-eicosatetraenoate + glutathione disulfide + H2O. It catalyses the reaction (15S)-hydroperoxy-(5Z,8Z,11Z,13E)-eicosatetraenoate + 2 glutathione = (15S)-hydroxy-(5Z,8Z,11Z,13E)-eicosatetraenoate + glutathione disulfide + H2O. In terms of biological role, catalyzes the reduction of hydroperoxides in a glutathione-dependent manner thus regulating cellular redox homeostasis. Can reduce small soluble hydroperoxides such as H2O2, cumene hydroperoxide and tert-butyl hydroperoxide, as well as several fatty acid-derived hydroperoxides. Cannot reduce phosphatidycholine hydroperoxide. This is Glutathione peroxidase 2 (GPX2) from Callithrix jacchus (White-tufted-ear marmoset).